The sequence spans 93 residues: Secretoglobin family 3A member 2 (93 aa).

An N-terminal signal peptide occupies residues 1–21 (MKLVTIFLLVTISLCSYSATA).

The protein belongs to the secretoglobin family. UGRP subfamily. As to quaternary structure, homodimer; disulfide-linked. Monomer. Interacts with APOA1. As to expression, highly expressed in lung and trachea. Detected throughout the airway epithelium in lung, with slightly higher expression in large airways. Found in lung submucosal gland acinus where it localizes to serous-like cells. Probably expressed in club cells of the bronchioles. Not detected in other tissues tested.

It is found in the secreted. Functionally, secreted cytokine-like protein. Binds to the scavenger receptor MARCO. Can also bind to pathogens including the Gram-positive bacterium L.monocytogenes, the Gram-negative bacterium P.aeruginosa, and yeast. Strongly inhibits phospholipase A2 (PLA2G1B) activity. Seems to have anti-inflammatory effects in respiratory epithelium. Also has anti-fibrotic activity in lung. May play a role in fetal lung development and maturation. Promotes branching morphogenesis during early stages of lung development. In the pituitary, may inhibit production of follicle-stimulating hormone (FSH) and luteinizing hormone (LH). This chain is Secretoglobin family 3A member 2 (SCGB3A2), found in Homo sapiens (Human).